We begin with the raw amino-acid sequence, 102 residues long: Protein iss (102 aa).

Functionally, increases serum survival and confers group II surface exclusion. The protein is Protein iss (iss) of Escherichia coli.